Reading from the N-terminus, the 42-residue chain is Potassium channel toxin gamma-KTx 1.6 (42 aa).

4 cysteine pairs are disulfide-bonded: Cys-5/Cys-23, Cys-11/Cys-34, Cys-20/Cys-39, and Cys-24/Cys-41.

This sequence belongs to the ergtoxin family. Gamma-KTx 1 subfamily. Expressed by the venom gland.

It is found in the secreted. In terms of biological role, blocks Kv11/ERG potassium channels. This is Potassium channel toxin gamma-KTx 1.6 from Centruroides exilicauda (Bark scorpion).